The primary structure comprises 271 residues: Meiotic drive suppressor wtf35 (271 aa).

2 disordered regions span residues 1–24 and 54–75; these read MKNNYTSLKSPLDEEDELKTDHEI and TVPEDSSTGPTETANPNVERRQ. Residues 57-69 are compositionally biased toward polar residues; that stretch reads EDSSTGPTETANP. The next 4 membrane-spanning stretches (helical) occupy residues 90–110, 120–140, 176–196, and 213–233; these read LLISVLAVSVVFFTAWVCVNP, AFSVTIGITCPILFIAIFCFF, WENMPMAFSEVFLFNILVGSP, and SLAEHITFVVLSILVFIAETV.

This sequence belongs to the WTF family. Homomer. Interacts with other proteins that exhibit high sequence similarity.

It is found in the spore membrane. The protein localises to the vacuole membrane. Acts as a suppressor component of the dual wtf meiotic drive system, and can suppress but not confer meiotic drive by compatible poisons. Wtf meiotic drive systems promote unequal transmission of alleles from the parental zygote to progeny spores by encoding a poison and an antidote from the same locus; the poison is trans-acting and forms toxic aggregates in all spores within an ascus, wherease the antidote is spore-specific and targets aggregates for degradation by the vacuole. Meiotic drive by wtf systems therefore lead to poisoning of all progeny that do not inherit the dual poison/antidote allele, or express a compatible antidote. This chain is Meiotic drive suppressor wtf35, found in Schizosaccharomyces kambucha (Fission yeast).